The following is a 493-amino-acid chain: 1-aminocyclopropane-1-carboxylate synthase 1 (493 aa).

Lys279 bears the N6-(pyridoxal phosphate)lysine mark.

This sequence belongs to the class-I pyridoxal-phosphate-dependent aminotransferase family. Homodimer. Pyridoxal 5'-phosphate is required as a cofactor.

The enzyme catalyses S-adenosyl-L-methionine = 1-aminocyclopropane-1-carboxylate + S-methyl-5'-thioadenosine + H(+). It participates in alkene biosynthesis; ethylene biosynthesis via S-adenosyl-L-methionine; ethylene from S-adenosyl-L-methionine: step 1/2. Its function is as follows. Catalyzes the formation of 1-aminocyclopropane-1-carboxylate, a direct precursor of ethylene in higher plants. The protein is 1-aminocyclopropane-1-carboxylate synthase 1 (ACC1A) of Cucurbita pepo (Vegetable marrow).